The primary structure comprises 424 residues: 5,5'-dehydrodivanillate O-demethylase oxygenase subunit (424 aa).

The region spanning 27-135 is the Rieske domain; it reads WHPIGGESEF…VRALGGLLWA (109 aa). Positions 68, 70, 87, and 90 each coordinate [2Fe-2S] cluster. Fe cation contacts are provided by H181, H186, and D306.

It belongs to the bacterial ring-hydroxylating dioxygenase alpha subunit family. Homotrimer. The three-component monooxygenase is composed of an oxygenase (LigXa), a ferredoxin (LigXc) and a ferredoxin reductase (LigXd). Requires [2Fe-2S] cluster as cofactor. It depends on Fe cation as a cofactor.

The enzyme catalyses 5,5'-dehydrodivanillate + NADH + O2 + H(+) = 2,2',3-trihydroxy-3'-methoxy-5,5'-dicarboxybiphenyl + formaldehyde + NAD(+) + H2O. Involved in the catabolism of 5,5'-dehydrodivanillate (DDVA), an intermediate in the biodegradation of lignin. Part of a three-component monooxygenase that catalyzes the O-demethylation of DDVA, leading to the formation of 2,2',3-trihydroxy-3'-methoxy-5,5'-dicarboxybiphenyl (OH-DDVA). The protein is 5,5'-dehydrodivanillate O-demethylase oxygenase subunit of Sphingobium sp. (strain NBRC 103272 / SYK-6).